Here is a 324-residue protein sequence, read N- to C-terminus: Homeobox protein Nkx-2.5 (324 aa).

The homeobox DNA-binding region spans 138–197 (RRKPRVLFSQAQVYELERRFKQQRYLSAPERDQLASVLKLTSTQVKIWFQNRRYKCKRQR).

The protein belongs to the NK-2 homeobox family. As to quaternary structure, homodimer (via the homeobox); binds DNA as homodimer. Interacts (via the homeobox) with TBX5 (via the T-box); this complex binds DNA. Interacts with HIPK1 and HIPK2, but not HIPK3. Interacts with the C-terminal zinc finger of GATA4 through its homeobox domain. Also interacts with JARID2 which represses its ability to activate transcription of ANF. Interacts with FBLIM1. Interacts with TBX18. Interacts with histone methyltransferase NSD2 (via HMG box). Interacts with NEDD9. Interacts with TBX1. Expressed only in the heart.

Its subcellular location is the nucleus. Functionally, transcription factor required for the development of the heart and the spleen. During heart development, acts as a transcriptional activator of NPPA/ANF in cooperation with GATA4. May cooperate with TBX2 to negatively modulate expression of NPPA/ANF in the atrioventricular canal. Binds to the core DNA motif of NPPA promoter. Together with PBX1, required for spleen development through a mechanism that involves CDKN2B repression. Positively regulates transcription of genes such as COL3A1 and MMP2, resulting in increased pulmonary endothelial fibrosis in response to hypoxia. The protein is Homeobox protein Nkx-2.5 (NKX2-5) of Homo sapiens (Human).